A 322-amino-acid chain; its full sequence is DNA repair and recombination protein RadA (322 aa).

105–112 (GMYGSGKT) lines the ATP pocket.

Belongs to the eukaryotic RecA-like protein family.

In terms of biological role, involved in DNA repair and in homologous recombination. Binds and assemble on single-stranded DNA to form a nucleoprotein filament. Hydrolyzes ATP in a ssDNA-dependent manner and promotes DNA strand exchange between homologous DNA molecules. This Methanococcus maripaludis (strain C6 / ATCC BAA-1332) protein is DNA repair and recombination protein RadA.